We begin with the raw amino-acid sequence, 672 residues long: UvrABC system protein B (672 aa).

One can recognise a Helicase ATP-binding domain in the interval 26–181 (AGLEDGLAYQ…ILQRLAELQY (156 aa)). 39–46 (GVTGSGKT) provides a ligand contact to ATP. The Beta-hairpin signature appears at 92-115 (YYDYYQPEAYVPSSDTYIEKDASI). The Helicase C-terminal domain occupies 430 to 592 (QVDDLLSEIK…ITPKSIQKAV (163 aa)). The region spanning 631–666 (AKELRKLEEQMYHHARNLEFEEAAAVRDKIQHIRKG) is the UVR domain.

This sequence belongs to the UvrB family. Forms a heterotetramer with UvrA during the search for lesions. Interacts with UvrC in an incision complex.

The protein localises to the cytoplasm. The UvrABC repair system catalyzes the recognition and processing of DNA lesions. A damage recognition complex composed of 2 UvrA and 2 UvrB subunits scans DNA for abnormalities. Upon binding of the UvrA(2)B(2) complex to a putative damaged site, the DNA wraps around one UvrB monomer. DNA wrap is dependent on ATP binding by UvrB and probably causes local melting of the DNA helix, facilitating insertion of UvrB beta-hairpin between the DNA strands. Then UvrB probes one DNA strand for the presence of a lesion. If a lesion is found the UvrA subunits dissociate and the UvrB-DNA preincision complex is formed. This complex is subsequently bound by UvrC and the second UvrB is released. If no lesion is found, the DNA wraps around the other UvrB subunit that will check the other stand for damage. The polypeptide is UvrABC system protein B (Coxiella burnetii (strain Dugway 5J108-111)).